A 606-amino-acid polypeptide reads, in one-letter code: MKVINLIPTLTLTSLIILTLPITMTLLQNNKTNCFLYITKMAVTCAFAISLIPTLLFLQSNQEAYISNWHWMTIQTLKLSLSFKLDFFSLTFMPIALFITWSIMEFSLWYMHSDPHINRFFKYLLLFLITMLILVSANNLLQLFMGWEGVGIMSFLLISWWHGRTDANTAALQAMLYNRIGDMGFIMMMAWFIIHLNSWEFQQIFLTNPKNTTLPLLGLLLASAGKSAQFGLHPWLPSAMEGPTPVSALLHSSTMVMAGVFTLIRFYPLMENNLTIQTSTLCLGAITTLFTAICALTQNDIKKIIALSTSSQLGLMMVTIGINQPHLAFTHMCTHAFFKAMLFLSSGSIIHNLDNEQDIRKMGGLYKTMPITSTAIIIGSLALTGMPFLTGFYSKDPIIETANMSYINTWALLITLIAVSMTASYSTRIIFFALLGQPRYPTLIQVNENNPYLINPIKRLILGSIFMGFFISMNTIPHTTPQMTMPPHLKFMALAVTLLGFTVATELNNMTHNLTFKQPSRMHTFSTTLGYYPTTTHRILPYLSLTMSQNLATTIMDSIWLEKMIPKNLTTMQKTAASLVSNQKGLMKLYFLSFLLSITLGLLITL.

The next 15 membrane-spanning stretches (helical) occupy residues 3 to 23 (VINL…LPIT), 38 to 58 (ITKM…LLFL), 87 to 107 (FFSL…MEFS), 124 to 144 (LLLF…LQLF), 180 to 200 (IGDM…NSWE), 216 to 236 (LLGL…HPWL), 244 to 264 (TPVS…FTLI), 276 to 296 (IQTS…ICAL), 304 to 323 (IIAL…IGIN), 328 to 350 (AFTH…GSII), 369 to 389 (MPIT…MPFL), 404 to 424 (MSYI…MTAS), 460 to 480 (LILG…PHTT), 483 to 503 (MTMP…GFTV), and 586 to 606 (LMKL…LITL).

It belongs to the complex I subunit 5 family. Core subunit of respiratory chain NADH dehydrogenase (Complex I) which is composed of 45 different subunits.

Its subcellular location is the mitochondrion inner membrane. It carries out the reaction a ubiquinone + NADH + 5 H(+)(in) = a ubiquinol + NAD(+) + 4 H(+)(out). Core subunit of the mitochondrial membrane respiratory chain NADH dehydrogenase (Complex I) which catalyzes electron transfer from NADH through the respiratory chain, using ubiquinone as an electron acceptor. Essential for the catalytic activity and assembly of complex I. This Elephas maximus (Indian elephant) protein is NADH-ubiquinone oxidoreductase chain 5 (MT-ND5).